A 318-amino-acid polypeptide reads, in one-letter code: Trans-prenyltransferase (318 aa).

A helical transmembrane segment spans residues 1-21 (MLHLIYISIIVVLIIILISYT). Residues Lys85, Arg88, and His122 each coordinate isopentenyl diphosphate. Mg(2+) contacts are provided by Asp129 and Asp135. A dimethylallyl diphosphate-binding site is contributed by Arg140. Position 141 (Arg141) interacts with isopentenyl diphosphate. Positions 216, 217, and 254 each coordinate dimethylallyl diphosphate.

The protein belongs to the FPP/GGPP synthase family. Asfivirus trans-prenyltransferase subfamily. Requires Mg(2+) as cofactor.

The protein resides in the host endoplasmic reticulum. Its subcellular location is the host membrane. It carries out the reaction isopentenyl diphosphate + dimethylallyl diphosphate = (2E)-geranyl diphosphate + diphosphate. The catalysed reaction is isopentenyl diphosphate + (2E)-geranyl diphosphate = (2E,6E)-farnesyl diphosphate + diphosphate. It catalyses the reaction isopentenyl diphosphate + (2E,6E)-farnesyl diphosphate = (2E,6E,10E)-geranylgeranyl diphosphate + diphosphate. The enzyme catalyses isopentenyl diphosphate + (2E,6E,10E)-geranylgeranyl diphosphate = (2E,6E,10E,14E)-geranylfarnesyl diphosphate + diphosphate. It functions in the pathway isoprenoid biosynthesis; farnesyl diphosphate biosynthesis; farnesyl diphosphate from geranyl diphosphate and isopentenyl diphosphate: step 1/1. Its pathway is isoprenoid biosynthesis; geranyl diphosphate biosynthesis; geranyl diphosphate from dimethylallyl diphosphate and isopentenyl diphosphate: step 1/1. The protein operates within isoprenoid biosynthesis; geranylgeranyl diphosphate biosynthesis; geranylgeranyl diphosphate from farnesyl diphosphate and isopentenyl diphosphate: step 1/1. Its function is as follows. Trans-prenyltransferase that catalyzes the sequential condensation of isopentenyl diphosphate (IPP) with different allylic diphosphates, such as dimethylallyl diphosphate (DMAPP), geranyl diphosphate (GPP), farnesyl diphosphate (FPP) and geranylgeranyl diphosphate (GGPP), farnesyl diphosphate being the best allylic substrate. The protein is Trans-prenyltransferase of African swine fever virus (isolate Tick/Malawi/Lil 20-1/1983) (ASFV).